We begin with the raw amino-acid sequence, 437 residues long: Ribosomal protein uS12 methylthiotransferase RimO (437 aa).

Residues 3–114 (ATIAVTHLGC…IVEVVERSRT (112 aa)) enclose the MTTase N-terminal domain. Positions 12, 48, 77, 152, 156, and 159 each coordinate [4Fe-4S] cluster. Residues 138–367 (TTTEAVAYLK…MRLQQTISQR (230 aa)) form the Radical SAM core domain. One can recognise a TRAM domain in the interval 370–436 (ASQVGRVVPV…PYDLCGEVFQ (67 aa)).

Belongs to the methylthiotransferase family. RimO subfamily. Requires [4Fe-4S] cluster as cofactor.

The protein resides in the cytoplasm. It catalyses the reaction L-aspartate(89)-[ribosomal protein uS12]-hydrogen + (sulfur carrier)-SH + AH2 + 2 S-adenosyl-L-methionine = 3-methylsulfanyl-L-aspartate(89)-[ribosomal protein uS12]-hydrogen + (sulfur carrier)-H + 5'-deoxyadenosine + L-methionine + A + S-adenosyl-L-homocysteine + 2 H(+). Its function is as follows. Catalyzes the methylthiolation of an aspartic acid residue of ribosomal protein uS12. This Gloeobacter violaceus (strain ATCC 29082 / PCC 7421) protein is Ribosomal protein uS12 methylthiotransferase RimO.